Here is a 394-residue protein sequence, read N- to C-terminus: Proliferation-associated protein 2G4 (394 aa).

S2 carries the post-translational modification N-acetylserine. S2 is subject to Phosphoserine. Residues S2–L48 form a necessary for nucleolar localization region. Residues L46–A54 are RNA-binding. K298 participates in a covalent cross-link: Glycyl lysine isopeptide (Lys-Gly) (interchain with G-Cter in SUMO2). A necessary for nucleolar localization region spans residues L301–D394. The residue at position 335 (S335) is a Phosphoserine. The interval L358–D394 is disordered. The residue at position 361 (S361) is a Phosphoserine; by PKC/PRKCD. Positions S361–S375 are interaction with RNA. A compositionally biased stretch (basic residues) spans K365–S375. Residues T366 and T386 each carry the phosphothreonine modification.

It belongs to the peptidase M24 family. In terms of assembly, isoform 2 interacts with the cytoplasmic domain of non-phosphorylated ERBB3; the interaction requires PKC activity. Interacts with AR. Treatment with HRG leads to dissociation from ERBB3 and increases association with AR. Interacts with NCL/nucleolin. Component of a ribonucleoprotein complex containing at least PA2G4, NCL, TOP1, PABPC2, RPLP0, acetylated histone H1 (HIST1H1A or H1F1), histone H1 2/4, RPL4, RPL8, RPL15, RPL18, RPL18A, RPL21, RPL11, RPL12, RPL28, RPL27, RPLP2 and RPL24. Interacts with HDAC2. Interacts with RB1; the interaction is enhanced upon PA2G4 dephosphorylation. Interacts with AKT1. Isoform 1 and isoform 2 interact with RNF20. Isoform 2 interacts with HUWE1. Interacts with DNAJC21. Post-translationally, phosphorylated on serine and threonine residues. Phosphorylation is enhanced by HRG treatment. Basal phosphorylation is PKC-dependent and HRG-induced phosphorylation is predominantly PKC-independent. Phosphorylation at Ser-361 by PKC/PRKCD regulates its nucleolar localization. In cancer cells, isoform 2 is polyubiquitinated leading to its proteasomal degradation and phosphorylation by PKC/PRKCD enhances polyubiquitination. As to expression, isoform 2 is undetectable whereas isoform 1 is strongly expressed in cancer cells (at protein level). Isoform 1 and isoform 2 are widely expressed, including heart, brain, lung, pancreas, skeletal muscle, kidney, placenta and liver.

Its subcellular location is the cytoplasm. It localises to the nucleus. The protein localises to the nucleolus. May play a role in a ERBB3-regulated signal transduction pathway. Seems be involved in growth regulation. Acts a corepressor of the androgen receptor (AR) and is regulated by the ERBB3 ligand neuregulin-1/heregulin (HRG). Inhibits transcription of some E2F1-regulated promoters, probably by recruiting histone acetylase (HAT) activity. Binds RNA. Associates with 28S, 18S and 5.8S mature rRNAs, several rRNA precursors and probably U3 small nucleolar RNA. May be involved in regulation of intermediate and late steps of rRNA processing. May be involved in ribosome assembly. Mediates cap-independent translation of specific viral IRESs (internal ribosomal entry site). Regulates cell proliferation, differentiation, and survival. Isoform 1 suppresses apoptosis whereas isoform 2 promotes cell differentiation. The polypeptide is Proliferation-associated protein 2G4 (PA2G4) (Homo sapiens (Human)).